A 1609-amino-acid polypeptide reads, in one-letter code: Probable outer membrane protein pmp21 (1609 aa).

An N-terminal signal peptide occupies residues 1–30 (MVAKKTVRSYRSSFSHSVIVAILSAGIAFE). The span at 132-145 (FSQPTQEPDTSNAV) shows a compositional bias: polar residues. Disordered stretches follow at residues 132 to 183 (FSQP…KSPE) and 640 to 677 (TAPV…EVPP). Basic and acidic residues-rich tracts occupy residues 149 to 175 (ISSD…KEVS) and 651 to 672 (NKDE…KTVE). Residues 1328-1609 (ELDFSTNVWG…DFNGGIRIIF (282 aa)) enclose the Autotransporter domain.

This sequence belongs to the PMP outer membrane protein family.

It localises to the secreted. It is found in the cell wall. Its subcellular location is the cell outer membrane. The chain is Probable outer membrane protein pmp21 (pmp21) from Chlamydia pneumoniae (Chlamydophila pneumoniae).